The following is a 1085-amino-acid chain: MKLTKGCAYKYIIFTVLILANILYDNKKRCMIKKNLRISSCGIISRLLKSNSNYNSFNKNYNFTSAISELQFSNFWNLDILQKDIFSNIHNNKNKPQSYIIHKRLMSEKGDNNNNNHQNNNGNDNKKRLGSVVNNEENTCSDKRMKPFEEGHGITQVDKMNNNSDHLQQNGVMNLNSNNVENNNNNNSVVVKKNEPKIHYRKDYKPSGFIINNVTLNINIHDNETIVRSVLDMDISKHNVGEDLVFDGVGLKINEISINNKKLVEGEEYTYDNEFLTIFSKFVPKSKFAFSSEVIIHPETNYALTGLYKSKNIIVSQCEATGFRRITFFIDRPDMMAKYDVTVTADKEKYPVLLSNGDKVNEFEIPGGRHGARFNDPHLKPCYLFAVVAGDLKHLSATYITKYTKKKVELYVFSEEKYVSKLQWALECLKKSMAFDEDYFGLEYDLSRLNLVAVSDFNVGAMENKGLNIFNANSLLASKKNSIDFSYARILTVVGHEYFHNYTGNRVTLRDWFQLTLKEGLTVHRENLFSEEMTKTVTTRLSHVDLLRSVQFLEDSSPLSHPIRPESYVSMENFYTTTVYDKGSEVMRMYLTILGEEYYKKGFDIYIKKNDGNTATCEDFNYAMEQAYKMKKADNSANLNQYLLWFSQSGTPHVSFKYNYDAEKKQYSIHVNQYTKPDENQKEKKPLFIPISVGLINPENGKEMISQTTLELTKESDTFVFNNIAVKPIPSLFRGFSAPVYIEDNLTDEERILLLKYDSDAFVRYNSCTNIYMKQILMNYNEFLKAKNEKLESFNLTPVNAQFIDAIKYLLEDPHADAGFKSYIVSLPQDRYIINFVSNLDTDVLADTKEYIYKQIGDKLNDVYYKMFKSLEAKADDLTYFNDESHVDFDQMNMRTLRNTLLSLLSKAQYPNILNEIIEHSKSPYPSNWLTSLSVSAYFDKYFELYDKTYKLSKDDELLLQEWLKTVSRSDRKDIYEILKKLENEVLKDSKNPNDIRAVYLPFTNNLRRFHDISGKGYKLIAEVITKTDKFNPMVATQLCEPFKLWNKLDTKRQELMLNEMNTMLQEPNISNNLKEYLLRLTNKL.

A signal peptide (required for ER targeting and membrane association; not cleaved) is located at residues 1 to 30 (MKLTKGCAYKYIIFTVLILANILYDNKKRC). Residues 1–200 (MKLTKGCAYK…VKKNEPKIHY (200 aa)) are sufficient for targeting to the food vacuole. The disordered stretch occupies residues 108-130 (EKGDNNNNNHQNNNGNDNKKRLG). Positions 112-123 (NNNNNHQNNNGN) are enriched in low complexity. A peptide is bound by residues E319, G460, A461, and E463. Residue H496 participates in Zn(2+) binding. E497 (proton acceptor) is an active-site residue. 2 residues coordinate Zn(2+): H500 and E519.

This sequence belongs to the peptidase M1 family. Heterodimer of the p68 form and the p35 form which are derived from the p120 precursor. Zn(2+) serves as cofactor. The full length protein appears to be cleaved into a 120 kDa precursor. This precursor is then proteolytically cleaved at the N-terminus generating a 96 kDa form which is further processed at the C-terminus into 68 kDa and 35 kDa forms that remain associated.

The protein resides in the parasitophorous vacuole membrane. The protein localises to the nucleus. Its subcellular location is the cytoplasm. It is found in the vacuole lumen. With respect to regulation, inhibited by 1,10-phenanthroline, EDTA and bestatin. Inhibited by (Benzyl)Tyr-Ala (BTA). Activity is not affected by phosphoramidin, PMSF, leupeptin, iodoacetamide or pepstatin. Functionally, displays aminopeptidase activity with a broad substrate specificity. Preferentially, cleaves after Leu and Met, but also cleaves after Ala and Arg. Low activity towards Lys, Phe, Tyr, Trp, Gln, Ser and Gly and negligible activity towards Glu, Asp, Pro, Ile, Thr, Val, His and Asn. Has dipeptidase activity. Plays a role in the terminal stages of host hemoglobin digestion by cleaving the N-terminal residue of small hemoglobin-derived oligopeptides. The chain is Aminopeptidase N from Plasmodium falciparum (isolate 3D7).